Here is a 1111-residue protein sequence, read N- to C-terminus: Putative leucine--tRNA ligase, cytoplasmic (1111 aa).

The 'HIGH' region motif lies at 74–84; it reads PYMNGALHLGH. Ser460 carries the post-translational modification Phosphoserine. A 'KMSKS' region motif is present at residues 737-741; that stretch reads KMSKS. Residue Lys740 coordinates ATP.

It belongs to the class-I aminoacyl-tRNA synthetase family.

It is found in the cytoplasm. The catalysed reaction is tRNA(Leu) + L-leucine + ATP = L-leucyl-tRNA(Leu) + AMP + diphosphate. In Schizosaccharomyces pombe (strain 972 / ATCC 24843) (Fission yeast), this protein is Putative leucine--tRNA ligase, cytoplasmic (lrs1).